A 396-amino-acid polypeptide reads, in one-letter code: NADH-quinone oxidoreductase subunit D (396 aa).

It belongs to the complex I 49 kDa subunit family. As to quaternary structure, NDH-1 is composed of 14 different subunits. Subunits NuoB, C, D, E, F, and G constitute the peripheral sector of the complex.

It localises to the cell inner membrane. It catalyses the reaction a quinone + NADH + 5 H(+)(in) = a quinol + NAD(+) + 4 H(+)(out). Its function is as follows. NDH-1 shuttles electrons from NADH, via FMN and iron-sulfur (Fe-S) centers, to quinones in the respiratory chain. The immediate electron acceptor for the enzyme in this species is believed to be ubiquinone. Couples the redox reaction to proton translocation (for every two electrons transferred, four hydrogen ions are translocated across the cytoplasmic membrane), and thus conserves the redox energy in a proton gradient. The chain is NADH-quinone oxidoreductase subunit D from Bartonella bacilliformis (strain ATCC 35685 / KC583 / Herrer 020/F12,63).